The chain runs to 355 residues: MNIYRYEENPLITPLDVKPIHEGFEVIGAFNGGVAEYNGEVLLLLRVAEKPVSEDPEIVLAPVYNAKNKELELQSFRLDDENYDFEDPRMIRSKAKLEGFSYLTSLSYIRIARSKDGHHFTLDEKPFLYPFNEYQTFGIEDARVTQIGDTYHVNFSAVSEFGVADALVTTKDFENLEYQGNIFAPENKDVLIFPEKINGKYYALHRPSLKSIGNLDIWIASSPDLRSFGDHRHLLGIRPGEYDSGRVGGGCVPIKTEEGWLILYHGATEENRYVMGAALLDLNDPTIVLKRTKTPILEPVADYEKNGFFGDVVFACGAIQEGDTLHMYYGVADTSMAGCDMKISEILHQLEVEAK.

Beta-D-Manp-(1-&gt;2)-beta-D-Manp-(1-&gt;2)-D-Manp contacts are provided by residues N31, R46, R89, 140–141 (ED), K188, Y273, and D333.

The protein belongs to the glycosyl hydrolase 130 family. Homodimer.

The enzyme catalyses beta-D-mannopyranosyl-(1-&gt;2)-D-mannopyranose + phosphate = alpha-D-mannose 1-phosphate + D-mannose. In terms of biological role, catalyzes the reversible phosphorolysis of 1,2-beta-oligomannan. In phosphorolytic reactions, prefers beta-1,2-mannobiose (beta-1,2-Man2) as substrate, but can also use beta-1,2-mannotriose. This is Beta-1,2-mannobiose phosphorylase from Listeria innocua serovar 6a (strain ATCC BAA-680 / CLIP 11262).